Reading from the N-terminus, the 261-residue chain is Cytochrome c oxidase subunit 3 (261 aa).

Residues M1 to P15 lie on the Mitochondrial matrix side of the membrane. A helical membrane pass occupies residues W16 to W34. Residues F35–M40 lie on the Mitochondrial intermembrane side of the membrane. A helical transmembrane segment spans residues Y41–T66. Residues F67–T72 lie on the Mitochondrial matrix side of the membrane. A helical membrane pass occupies residues P73 to S105. Residues L106–E128 lie on the Mitochondrial intermembrane side of the membrane. A helical membrane pass occupies residues V129–M152. Topologically, residues E153–N155 are mitochondrial matrix. Residues R156–E183 traverse the membrane as a helical segment. Residues A184–D190 are Mitochondrial intermembrane-facing. The helical transmembrane segment at G191–I223 threads the bilayer. Residues Q224–H232 lie on the Mitochondrial matrix side of the membrane. Residues F233–I256 traverse the membrane as a helical segment. Over Y257–S261 the chain is Mitochondrial intermembrane.

The protein belongs to the cytochrome c oxidase subunit 3 family. As to quaternary structure, component of the cytochrome c oxidase (complex IV, CIV), a multisubunit enzyme composed of 14 subunits. The complex is composed of a catalytic core of 3 subunits MT-CO1, MT-CO2 and MT-CO3, encoded in the mitochondrial DNA, and 11 supernumerary subunits COX4I, COX5A, COX5B, COX6A, COX6B, COX6C, COX7A, COX7B, COX7C, COX8 and NDUFA4, which are encoded in the nuclear genome. The complex exists as a monomer or a dimer and forms supercomplexes (SCs) in the inner mitochondrial membrane with NADH-ubiquinone oxidoreductase (complex I, CI) and ubiquinol-cytochrome c oxidoreductase (cytochrome b-c1 complex, complex III, CIII), resulting in different assemblies (supercomplex SCI(1)III(2)IV(1) and megacomplex MCI(2)III(2)IV(2)).

Its subcellular location is the mitochondrion inner membrane. It catalyses the reaction 4 Fe(II)-[cytochrome c] + O2 + 8 H(+)(in) = 4 Fe(III)-[cytochrome c] + 2 H2O + 4 H(+)(out). In terms of biological role, component of the cytochrome c oxidase, the last enzyme in the mitochondrial electron transport chain which drives oxidative phosphorylation. The respiratory chain contains 3 multisubunit complexes succinate dehydrogenase (complex II, CII), ubiquinol-cytochrome c oxidoreductase (cytochrome b-c1 complex, complex III, CIII) and cytochrome c oxidase (complex IV, CIV), that cooperate to transfer electrons derived from NADH and succinate to molecular oxygen, creating an electrochemical gradient over the inner membrane that drives transmembrane transport and the ATP synthase. Cytochrome c oxidase is the component of the respiratory chain that catalyzes the reduction of oxygen to water. Electrons originating from reduced cytochrome c in the intermembrane space (IMS) are transferred via the dinuclear copper A center (CU(A)) of subunit 2 and heme A of subunit 1 to the active site in subunit 1, a binuclear center (BNC) formed by heme A3 and copper B (CU(B)). The BNC reduces molecular oxygen to 2 water molecules using 4 electrons from cytochrome c in the IMS and 4 protons from the mitochondrial matrix. This is Cytochrome c oxidase subunit 3 (MT-CO3) from Squalus acanthias (Spiny dogfish).